A 271-amino-acid chain; its full sequence is MDFFNKFSQGLAESSTPKSSIYYSEEKDLDIKKDEAIEIGLKSQESYYQRQLREQLARDNMMAASRQPIQPLQPTIHITPLQVPTPAPTPKPRQQQTNTSSDMSNLFDWLSADDNTQPSSLLPALTPINAVQDIISKFNKDQKTTTTPSTQPSQTLPTTTCTQQSDGSISCTTPTVTPPQPPIVATVCTPTPTGGTVCTTAQQNPNPGATSQQNLDNMALKDLMSSVEKDMRQLQAETNDLVTNVYDAREYTRRAIDQILQLVKGFERFQK.

Disordered regions lie at residues 80-101 (PLQV…NTSS) and 140-180 (KDQK…TPPQ). Polar residues predominate over residues 92–101 (PRQQQTNTSS). A compositionally biased stretch (low complexity) spans 144–165 (TTTTPSTQPSQTLPTTTCTQQS).

It belongs to the orthopoxvirus OPG130 family. As to quaternary structure, interacts with OPG136 and its cleaved form. Its phosphorylation state is regulated by the OPG054 kinase and the OPG106 phosphatase.

Its subcellular location is the virion. It is found in the host endoplasmic reticulum-Golgi intermediate compartment membrane. Its function is as follows. Component of the virion core. Participates in virion assembly. The polypeptide is 39kDa core protein OPG130 (OPG130) (Homo sapiens (Human)).